Reading from the N-terminus, the 324-residue chain is Mitochondrial thiamine pyrophosphate carrier 1 (324 aa).

Solcar repeat units follow at residues 12–110 (GNRI…ISSA), 119–205 (PQPV…LRSP), and 212–307 (PFGT…VLGL). Transmembrane regions (helical) follow at residues 15–35 (IQVV…VAPL), 79–99 (ITGL…YGGI), 125–145 (FISG…LDLL), 182–202 (TAAI…YEAL), 218–238 (AGAG…LDLV), and 282–299 (GLTV…VTMW).

It belongs to the mitochondrial carrier (TC 2.A.29) family.

The protein localises to the mitochondrion inner membrane. In terms of biological role, mitochondrial transporter that mediates uptake of thiamine pyrophosphate (ThPP) into mitochondria. This is Mitochondrial thiamine pyrophosphate carrier 1 (TPC1) from Ajellomyces capsulatus (strain NAm1 / WU24) (Darling's disease fungus).